Here is a 145-residue protein sequence, read N- to C-terminus: D-aminoacyl-tRNA deacylase (145 aa).

Residues 137-138 (GP) carry the Gly-cisPro motif, important for rejection of L-amino acids motif.

This sequence belongs to the DTD family. In terms of assembly, homodimer.

The protein resides in the cytoplasm. The catalysed reaction is glycyl-tRNA(Ala) + H2O = tRNA(Ala) + glycine + H(+). It carries out the reaction a D-aminoacyl-tRNA + H2O = a tRNA + a D-alpha-amino acid + H(+). In terms of biological role, an aminoacyl-tRNA editing enzyme that deacylates mischarged D-aminoacyl-tRNAs. Also deacylates mischarged glycyl-tRNA(Ala), protecting cells against glycine mischarging by AlaRS. Acts via tRNA-based rather than protein-based catalysis; rejects L-amino acids rather than detecting D-amino acids in the active site. By recycling D-aminoacyl-tRNA to D-amino acids and free tRNA molecules, this enzyme counteracts the toxicity associated with the formation of D-aminoacyl-tRNA entities in vivo and helps enforce protein L-homochirality. The protein is D-aminoacyl-tRNA deacylase of Shewanella baltica (strain OS223).